The following is a 114-amino-acid chain: Notch-regulated ankyrin repeat-containing protein (114 aa).

ANK repeat units lie at residues 50-79 (EGQT…DIRL) and 83-112 (DGWS…YAAS).

The protein belongs to the NRARP family. As to quaternary structure, interacts with LEF1.

Its function is as follows. Downstream effector of Notch signaling. Involved in the regulation of liver cancer cells self-renewal. Involved in angiogenesis acting downstream of Notch at branch points to regulate vascular density. Proposed to integrate endothelial Notch and Wnt signaling to control stalk cell proliferation and to stablilize new endothelial connections during angiogenesis. During somitogenesis involved in maintenance of proper somite segmentation and proper numbers of somites and vertebrae. Required for proper anterior-posterior somite patterning. Proposed to function in a negative feedback loop to destabilize Notch 1 intracellular domain (NICD) and down-regulate the Notch signal, preventing expansion of the Notch signal into the anterior somite domain. This Homo sapiens (Human) protein is Notch-regulated ankyrin repeat-containing protein (NRARP).